Reading from the N-terminus, the 678-residue chain is Zinc finger translocation-associated protein (678 aa).

Disordered regions lie at residues 1-100 (MEPG…PGRD), 182-250 (LGVQ…GSRG), 329-417 (QPEA…HRRH), and 490-583 (LGPP…NYQP). The span at 62–78 (SAPLPSSRARGPASSGR) shows a compositional bias: low complexity. Residues 79-88 (KYSDHCEARA) show a composition bias toward basic and acidic residues. The segment covering 187–201 (AEEEEEEEEEEEEEG) has biased composition (acidic residues). A Glycyl lysine isopeptide (Lys-Gly) (interchain with G-Cter in SUMO2) cross-link involves residue lysine 375. A compositionally biased stretch (acidic residues) spans 388-398 (AEEEEELEEGE). The segment covering 492–504 (PPRPESPQGPIPP) has biased composition (pro residues). Composition is skewed to acidic residues over residues 513–529 (GGGDEEEEPEEEEEEWG) and 543–553 (AEEEEDEEDGQ). Pro residues predominate over residues 560-572 (LPPPPPPPPPPPP). A compositionally biased stretch (basic and acidic residues) spans 573–583 (RSREQRRNYQP).

In Homo sapiens (Human), this protein is Zinc finger translocation-associated protein.